We begin with the raw amino-acid sequence, 512 residues long: Dihydroniloticin synthase CYP71CD2 (512 aa).

The helical transmembrane segment at 1 to 21 threads the bilayer; that stretch reads MNLQLDYFSITSFLVFLVVLF. C449 is a binding site for heme.

It belongs to the cytochrome P450 family. Heme is required as a cofactor.

The protein resides in the membrane. The catalysed reaction is tirucalla-7,24-dien-3beta-ol + 2 reduced [NADPH--hemoprotein reductase] + 2 O2 = dihydroniloticin + 2 oxidized [NADPH--hemoprotein reductase] + 2 H2O + 2 H(+). Its pathway is secondary metabolite biosynthesis; terpenoid biosynthesis. Monooxygenase involved in the biosynthesis of limonoids triterpene natural products such as azadirachtin, an antifeedant widely used as bioinsecticide, and possessing many medicinal applications including anti-tumoral, anti-malarial, anti-rheumatic, antibacterial, anti-inflammatory, anti-pyretic and diuretic effects. Catalyzes the conversion of tirucalladienol to dihydroniloticin. This is Dihydroniloticin synthase CYP71CD2 from Azadirachta indica (Neem tree).